Here is a 488-residue protein sequence, read N- to C-terminus: UDP-N-acetylmuramate--L-alanine ligase (488 aa).

ATP is bound at residue 129–135 (GSHGKTT).

Belongs to the MurCDEF family.

It localises to the cytoplasm. It catalyses the reaction UDP-N-acetyl-alpha-D-muramate + L-alanine + ATP = UDP-N-acetyl-alpha-D-muramoyl-L-alanine + ADP + phosphate + H(+). The protein operates within cell wall biogenesis; peptidoglycan biosynthesis. Its function is as follows. Cell wall formation. The polypeptide is UDP-N-acetylmuramate--L-alanine ligase (Prochlorococcus marinus (strain MIT 9303)).